A 340-amino-acid chain; its full sequence is Methionyl-tRNA formyltransferase (340 aa).

Position 110-113 (110-113 (SLLP)) interacts with (6S)-5,6,7,8-tetrahydrofolate.

The protein belongs to the Fmt family.

The enzyme catalyses L-methionyl-tRNA(fMet) + (6R)-10-formyltetrahydrofolate = N-formyl-L-methionyl-tRNA(fMet) + (6S)-5,6,7,8-tetrahydrofolate + H(+). Attaches a formyl group to the free amino group of methionyl-tRNA(fMet). The formyl group appears to play a dual role in the initiator identity of N-formylmethionyl-tRNA by promoting its recognition by IF2 and preventing the misappropriation of this tRNA by the elongation apparatus. This chain is Methionyl-tRNA formyltransferase, found in Synechococcus sp. (strain WH7803).